The primary structure comprises 560 residues: DNA ligase B (560 aa).

Catalysis depends on Lys-124, which acts as the N6-AMP-lysine intermediate.

It belongs to the NAD-dependent DNA ligase family. LigB subfamily.

It carries out the reaction NAD(+) + (deoxyribonucleotide)n-3'-hydroxyl + 5'-phospho-(deoxyribonucleotide)m = (deoxyribonucleotide)n+m + AMP + beta-nicotinamide D-nucleotide.. Functionally, catalyzes the formation of phosphodiester linkages between 5'-phosphoryl and 3'-hydroxyl groups in double-stranded DNA using NAD as a coenzyme and as the energy source for the reaction. This Escherichia coli (strain SMS-3-5 / SECEC) protein is DNA ligase B.